A 304-amino-acid polypeptide reads, in one-letter code: MGDSTKKAETAKDVGTSQEKREARPLPTAADFEGKDTSEDTDGRAADADGEMSLERRLDSLREFLRERRGAIRVTNPGLETGRPRLQLAENMRPDPTNPYNRPSIEALSRIKPIAISNNMATSEDMMRIYVNLEGLGVPTEHVQQVVIQAVLFCKDASSSVFLDPRGSFEWPRGAITADAVLAVLKKDAETLRRVCRLYAPVTWNHMLTHNAPPAEWAAMGFQYEDRFAPFDCFDYVENTAAVQPLEGLIRRPTPREKVAHNTHKDIALRGANRNQVFSSLNAEVTGGMNGPELTRDYVKSNRK.

2 stretches are compositionally biased toward basic and acidic residues: residues 1–24 (MGDS…REAR) and 32–54 (FEGK…EMSL). The tract at residues 1–54 (MGDSTKKAETAKDVGTSQEKREARPLPTAADFEGKDTSEDTDGRAADADGEMSL) is disordered.

The protein belongs to the potexviruses coat protein family.

It localises to the virion. Required for genome encapsidation. Forms ribonucleoprotein complexes along with TGB1 helicase and viral RNA. This is Capsid protein from Potato virus M (strain German) (PVM).